We begin with the raw amino-acid sequence, 149 residues long: Nucleoside diphosphate kinase (149 aa).

6 residues coordinate ATP: lysine 9, phenylalanine 57, arginine 85, threonine 91, arginine 102, and asparagine 112. The active-site Pros-phosphohistidine intermediate is histidine 115.

It belongs to the NDK family. In terms of assembly, homotetramer. The cofactor is Mg(2+).

Its subcellular location is the cytoplasm. The enzyme catalyses a 2'-deoxyribonucleoside 5'-diphosphate + ATP = a 2'-deoxyribonucleoside 5'-triphosphate + ADP. It carries out the reaction a ribonucleoside 5'-diphosphate + ATP = a ribonucleoside 5'-triphosphate + ADP. Major role in the synthesis of nucleoside triphosphates other than ATP. The ATP gamma phosphate is transferred to the NDP beta phosphate via a ping-pong mechanism, using a phosphorylated active-site intermediate. The polypeptide is Nucleoside diphosphate kinase (Staphylococcus haemolyticus (strain JCSC1435)).